Here is a 201-residue protein sequence, read N- to C-terminus: Cobalt-precorrin-7 C(5)-methyltransferase (201 aa).

Belongs to the precorrin methyltransferase family.

It carries out the reaction Co-precorrin-7 + S-adenosyl-L-methionine = Co-precorrin-8X + S-adenosyl-L-homocysteine + H(+). It functions in the pathway cofactor biosynthesis; adenosylcobalamin biosynthesis; cob(II)yrinate a,c-diamide from sirohydrochlorin (anaerobic route): step 8/10. In terms of biological role, catalyzes the methylation of C-5 in cobalt-precorrin-7 to form cobalt-precorrin-8. The polypeptide is Cobalt-precorrin-7 C(5)-methyltransferase (cbiE) (Salmonella typhi).